The chain runs to 155 residues: Putative pre-16S rRNA nuclease (155 aa).

This sequence belongs to the YqgF nuclease family.

It is found in the cytoplasm. Could be a nuclease involved in processing of the 5'-end of pre-16S rRNA. The polypeptide is Putative pre-16S rRNA nuclease (Xanthomonas euvesicatoria pv. vesicatoria (strain 85-10) (Xanthomonas campestris pv. vesicatoria)).